The chain runs to 865 residues: Bifunctional uridylyltransferase/uridylyl-removing enzyme (865 aa).

The uridylyltransferase stretch occupies residues 1 to 318; that stretch reads MPHVDLNPLK…FPRPDSDARL (318 aa). The tract at residues 319–675 is uridylyl-removing; the sequence is IDDDFRNLRE…VRPTEHGEGL (357 aa). An HD domain is found at 437-559; sequence VDQHTLAVVR…VGDERRLAAL (123 aa). ACT domains follow at residues 676–762 and 789–865; these read QVMV…RLPH and RLSV…QQAA. A disordered region spans residues 747–767; that stretch reads DPHAARHAHAPRRLPHSHARR. A compositionally biased stretch (basic residues) spans 751–767; sequence ARHAHAPRRLPHSHARR.

The protein belongs to the GlnD family. It depends on Mg(2+) as a cofactor.

It carries out the reaction [protein-PII]-L-tyrosine + UTP = [protein-PII]-uridylyl-L-tyrosine + diphosphate. The catalysed reaction is [protein-PII]-uridylyl-L-tyrosine + H2O = [protein-PII]-L-tyrosine + UMP + H(+). Its activity is regulated as follows. Uridylyltransferase (UTase) activity is inhibited by glutamine, while glutamine activates uridylyl-removing (UR) activity. In terms of biological role, modifies, by uridylylation and deuridylylation, the PII regulatory proteins (GlnB and homologs), in response to the nitrogen status of the cell that GlnD senses through the glutamine level. Under low glutamine levels, catalyzes the conversion of the PII proteins and UTP to PII-UMP and PPi, while under higher glutamine levels, GlnD hydrolyzes PII-UMP to PII and UMP (deuridylylation). Thus, controls uridylylation state and activity of the PII proteins, and plays an important role in the regulation of nitrogen assimilation and metabolism. The polypeptide is Bifunctional uridylyltransferase/uridylyl-removing enzyme (Bordetella pertussis (strain Tohama I / ATCC BAA-589 / NCTC 13251)).